The sequence spans 88 residues: Carboxysome shell vertex protein CsoS4A (88 aa).

In terms of domain architecture, BMV spans 1-76 (MLICKVLKPL…SDLTIVGIID (76 aa)).

This sequence belongs to the CcmL/EutN family. CsoS4 subfamily. In terms of assembly, homopentamer.

The protein localises to the carboxysome. Functionally, probably forms vertices in the carboxysome, a polyhedral inclusion where RuBisCO (ribulose bisphosphate carboxylase, cbbL-cbbS) is sequestered. Has been modeled to induce curvature upon insertion into an otherwise flat hexagonal layer of major carboxysome subunits. Has not been identified in purified carboxysomes; it is expected to be present in very low amounts. The polypeptide is Carboxysome shell vertex protein CsoS4A (Prochlorococcus marinus subsp. pastoris (strain CCMP1986 / NIES-2087 / MED4)).